The primary structure comprises 183 residues: Ribosome-recycling factor (183 aa).

This sequence belongs to the RRF family.

The protein resides in the cytoplasm. Its function is as follows. Responsible for the release of ribosomes from messenger RNA at the termination of protein biosynthesis. May increase the efficiency of translation by recycling ribosomes from one round of translation to another. This chain is Ribosome-recycling factor, found in Acetivibrio thermocellus (strain ATCC 27405 / DSM 1237 / JCM 9322 / NBRC 103400 / NCIMB 10682 / NRRL B-4536 / VPI 7372) (Clostridium thermocellum).